The chain runs to 194 residues: Peptidyl-tRNA hydrolase (194 aa).

TRNA is bound at residue Y17. Residue H22 is the Proton acceptor of the active site. Positions 68, 70, and 116 each coordinate tRNA.

The protein belongs to the PTH family. Monomer.

It localises to the cytoplasm. It carries out the reaction an N-acyl-L-alpha-aminoacyl-tRNA + H2O = an N-acyl-L-amino acid + a tRNA + H(+). Functionally, hydrolyzes ribosome-free peptidyl-tRNAs (with 1 or more amino acids incorporated), which drop off the ribosome during protein synthesis, or as a result of ribosome stalling. In terms of biological role, catalyzes the release of premature peptidyl moieties from peptidyl-tRNA molecules trapped in stalled 50S ribosomal subunits, and thus maintains levels of free tRNAs and 50S ribosomes. The protein is Peptidyl-tRNA hydrolase of Shewanella woodyi (strain ATCC 51908 / MS32).